The sequence spans 627 residues: (-)-alpha-pinene synthase 1, chloroplastic (627 aa).

Residues 1–36 (MALVSIAPLASKSCLHKSLSSSAHELKTICRTIPTL) constitute a chloroplast transit peptide. Asp378, Asp382, and Asp530 together coordinate Mg(2+). Residues 378-382 (DDMYD) carry the DDXXD motif motif.

This sequence belongs to the terpene synthase family. Tpsd subfamily. Mg(2+) serves as cofactor. Mn(2+) is required as a cofactor.

Its subcellular location is the plastid. The protein localises to the chloroplast. The catalysed reaction is (2E)-geranyl diphosphate = (1S,5S)-beta-pinene + diphosphate. The enzyme catalyses (2E)-geranyl diphosphate = (1S,5S)-alpha-pinene + diphosphate. Its pathway is terpene metabolism; oleoresin biosynthesis. Its function is as follows. Terpene synthase (TPS) involved in the biosynthesis of monoterpene natural products included in conifer oleoresin secretions and volatile emissions; these compounds contribute to biotic and abiotic stress defense against herbivores and pathogens. Catalyzes the conversion of (2E)-geranyl diphosphate (GPP) to (1S,5S)-beta-pinene. The sequence is that of (-)-alpha-pinene synthase 1, chloroplastic from Picea sitchensis (Sitka spruce).